The chain runs to 907 residues: Lipoxygenase 1, chloroplastic (907 aa).

Residues 1 to 49 constitute a chloroplast transit peptide; sequence MALAKQIMGASLMDQKTSVFGSNLCLNHVLVNKHRLRLRKTRKNGSMVV. A PLAT domain is found at 85 to 209; it reads DFFKDTIFRK…DLPNPRIFFT (125 aa). The Lipoxygenase domain maps to 212 to 907; sequence PYLPDETPVG…CRGVPNSISI (696 aa). Residues His-567, His-572, His-758, Asn-762, and Ile-907 each coordinate Fe cation.

It belongs to the lipoxygenase family. Fe cation is required as a cofactor. As to expression, confined to glandular trichomes in flowers, and, at low levels, in leaves.

Its subcellular location is the plastid. It is found in the chloroplast. The enzyme catalyses (9Z,12Z,15Z)-octadecatrienoate + O2 = 13-hydroperoxy-(9Z,11E,15Z)-octadecatrienoate. The protein operates within lipid metabolism; oxylipin biosynthesis. It participates in isoprenoid biosynthesis. Component of the monoterpenoid pyrethrins biosynthesis; pyrethrins are widely used plant-derived pesticide. Plant lipoxygenases may be involved in a number of diverse aspects of plant physiology including growth and development, pest resistance, and senescence or responses to wounding. Catalyzes the hydroperoxidation of lipids containing a cis,cis-1,4-pentadiene structure. Mediates the peroxidation of linolenic acid leading to the production of 13-hydroperoxylinolenic acid. The polypeptide is Lipoxygenase 1, chloroplastic (Tanacetum cinerariifolium (Dalmatian daisy)).